The primary structure comprises 670 residues: Small ribosomal subunit protein mS39 (670 aa).

Residues 1 to 13 (MAAPCVRLGSVRC) constitute a mitochondrion transit peptide. 11 PPR repeats span residues 129–163 (VEGV…GTAP), 164–199 (SLET…EVQD), 209–239 (RPRQ…MPER), 240–274 (NAHS…RLTA), 275–314 (DVQT…NVRP), 315–351 (NLLT…NIEP), 352–392 (SLAT…FTLR), 396–430 (DVYF…DNRG), 438–472 (QSTY…LYYP), 473–507 (NSRG…GHSN), and 556–590 (SAGS…HRVP). The disordered stretch occupies residues 187 to 213 (IQTSEQEQQEVQDQQETEDPKKRPRQY). Over residues 193–203 (EQQEVQDQQET) the composition is skewed to acidic residues. The disordered stretch occupies residues 648-670 (EDLQKSHSSSSSSSSSSSDSDRE). Residues 653 to 670 (SHSSSSSSSSSSSDSDRE) are compositionally biased toward low complexity.

It belongs to the mitochondrion-specific ribosomal protein mS39 family.

It localises to the mitochondrion. In terms of biological role, mitochondrial protein that may have a role in mitochondrial translation. This Xenopus tropicalis (Western clawed frog) protein is Small ribosomal subunit protein mS39 (ptcd3).